Consider the following 178-residue polypeptide: Inorganic pyrophosphatase (178 aa).

Substrate contacts are provided by Lys-29, Arg-43, and Tyr-55. Mg(2+) is bound by residues Asp-65, Asp-70, and Asp-102. Tyr-141 is a binding site for substrate.

It belongs to the PPase family. Homohexamer. Requires Mg(2+) as cofactor.

The protein localises to the cytoplasm. It carries out the reaction diphosphate + H2O = 2 phosphate + H(+). In terms of biological role, catalyzes the hydrolysis of inorganic pyrophosphate (PPi) forming two phosphate ions. The sequence is that of Inorganic pyrophosphatase from Rickettsia typhi (strain ATCC VR-144 / Wilmington).